The chain runs to 859 residues: Probable helicase A859L (859 aa).

Residues 178 to 349 (YQELRRSGRA…KNRELFGGVA (172 aa)) form the Helicase ATP-binding domain. Position 191-198 (191-198 (MACRCGKT)) interacts with ATP. Residues 298 to 301 (DECH) carry the DEAH box motif. The region spanning 394-553 (QIIMALAYLK…RFYEHLLNPS (160 aa)) is the Helicase C-terminal domain.

The protein belongs to the asfivirus helicase A859L family.

The chain is Probable helicase A859L from Ornithodoros (relapsing fever ticks).